The primary structure comprises 434 residues: Enolase A (434 aa).

The substrate site is built by His-160 and Glu-169. Glu-212 serves as the catalytic Proton donor. 3 residues coordinate Mg(2+): Asp-247, Glu-296, and Asp-321. Substrate contacts are provided by Glu-296 and Asp-321. Lys-346 acts as the Proton acceptor in catalysis. Residues Ser-373–Ser-376 and Lys-397 contribute to the substrate site.

It belongs to the enolase family. In terms of assembly, homodimer. Mg(2+) serves as cofactor.

It is found in the cytoplasm. It catalyses the reaction (2R)-2-phosphoglycerate = phosphoenolpyruvate + H2O. It functions in the pathway carbohydrate degradation; glycolysis; pyruvate from D-glyceraldehyde 3-phosphate: step 4/5. The chain is Enolase A (enoA) from Dictyostelium discoideum (Social amoeba).